The sequence spans 78 residues: Exodeoxyribonuclease 7 small subunit (78 aa).

This sequence belongs to the XseB family. As to quaternary structure, heterooligomer composed of large and small subunits.

Its subcellular location is the cytoplasm. The enzyme catalyses Exonucleolytic cleavage in either 5'- to 3'- or 3'- to 5'-direction to yield nucleoside 5'-phosphates.. Bidirectionally degrades single-stranded DNA into large acid-insoluble oligonucleotides, which are then degraded further into small acid-soluble oligonucleotides. In Actinobacillus succinogenes (strain ATCC 55618 / DSM 22257 / CCUG 43843 / 130Z), this protein is Exodeoxyribonuclease 7 small subunit.